A 203-amino-acid polypeptide reads, in one-letter code: Protein GrpE (203 aa).

A compositionally biased stretch (basic and acidic residues) spans 1-10 (MSNESIKAEQ). The interval 1–20 (MSNESIKAEQDLIQEGVESE) is disordered.

It belongs to the GrpE family. As to quaternary structure, homodimer.

Its subcellular location is the cytoplasm. Its function is as follows. Participates actively in the response to hyperosmotic and heat shock by preventing the aggregation of stress-denatured proteins, in association with DnaK and GrpE. It is the nucleotide exchange factor for DnaK and may function as a thermosensor. Unfolded proteins bind initially to DnaJ; upon interaction with the DnaJ-bound protein, DnaK hydrolyzes its bound ATP, resulting in the formation of a stable complex. GrpE releases ADP from DnaK; ATP binding to DnaK triggers the release of the substrate protein, thus completing the reaction cycle. Several rounds of ATP-dependent interactions between DnaJ, DnaK and GrpE are required for fully efficient folding. The chain is Protein GrpE from Shewanella sp. (strain MR-4).